Here is a 211-residue protein sequence, read N- to C-terminus: Histidine biosynthesis bifunctional protein HisIE (211 aa).

The tract at residues 1-117 (MSTQTNTKSD…CWLDGNAHPF (117 aa)) is phosphoribosyl-AMP cyclohydrolase. The interval 118–211 (LNNLAELIAS…LARHQKAQRK (94 aa)) is phosphoribosyl-ATP pyrophosphohydrolase.

This sequence in the N-terminal section; belongs to the PRA-CH family. The protein in the C-terminal section; belongs to the PRA-PH family.

The protein localises to the cytoplasm. It carries out the reaction 1-(5-phospho-beta-D-ribosyl)-ATP + H2O = 1-(5-phospho-beta-D-ribosyl)-5'-AMP + diphosphate + H(+). It catalyses the reaction 1-(5-phospho-beta-D-ribosyl)-5'-AMP + H2O = 1-(5-phospho-beta-D-ribosyl)-5-[(5-phospho-beta-D-ribosylamino)methylideneamino]imidazole-4-carboxamide. It participates in amino-acid biosynthesis; L-histidine biosynthesis; L-histidine from 5-phospho-alpha-D-ribose 1-diphosphate: step 2/9. Its pathway is amino-acid biosynthesis; L-histidine biosynthesis; L-histidine from 5-phospho-alpha-D-ribose 1-diphosphate: step 3/9. This is Histidine biosynthesis bifunctional protein HisIE from Shewanella oneidensis (strain ATCC 700550 / JCM 31522 / CIP 106686 / LMG 19005 / NCIMB 14063 / MR-1).